A 579-amino-acid chain; its full sequence is MFS-type transporter olcL (579 aa).

The segment covering 1–24 has biased composition (polar residues); sequence MANIGGSNAVSSAQGSQISDSPTT. A disordered region spans residues 1–75; sequence MANIGGSNAV…GFGEDGCQSD (75 aa). A compositionally biased stretch (basic and acidic residues) spans 25-35; that stretch reads VDDRLDEHKET. Polar residues predominate over residues 36–54; the sequence is STQSIDHSENITQSPTSLQ. Asn-45 carries N-linked (GlcNAc...) asparagine glycosylation. A run of 9 helical transmembrane segments spans residues 85–105, 121–141, 159–179, 183–203, 214–234, 241–261, 282–302, 310–330, and 355–375; these read LAAI…DNTI, GDVG…TLVF, AVFE…GLII, IAGL…SQSV, LVGG…GAFT, WCFY…LLFF, LIGL…LQWG, SGRI…FIMV, and LFNF…PVWF. Asn-380 is a glycosylation site (N-linked (GlcNAc...) asparagine). 5 helical membrane passes run 388–408, 411–431, 439–459, 479–501, and 553–573; these read LMNL…GYGV, IGYY…GAGL, FGPS…GLGL, IAIV…QNVF, and FYVG…IQWI.

The protein belongs to the major facilitator superfamily. TCR/Tet family.

It is found in the peroxisome membrane. MFS-type transporter; part of the gene cluster that mediates the biosynthesis of 15-deoxyoxalicine B. The first step of the pathway is the synthesis of nicotinyl-CoA from nicotinic acid by the nicotinic acid-CoA ligase olcI. Nicotinyl-CoA is then a substrate of polyketide synthase olcA to produce 4-hydroxy-6-(3-pyridinyl)-2H-pyran-2-one (HPPO) which is further prenylated by the polyprenyl transferase olcH to yield geranylgeranyl-HPPO. Geranylgeranyl pyrophosphate is provided by the cluster-specific geranylgeranyl pyrophosphate synthase olcC. The FAD-dependent monooxygenase olcE catalyzes the epoxidation of geranylgeranyl-HPPO and the terpene cyclase olcD catalyzes the cyclization of the terpenoid component, resulting in the formation of the tricyclic terpene moiety seen in predecaturin E. The cytochrome P450 monooxygenase then catalyzes the allylic oxidation of predecaturin E, which is followed by spirocylization with concomitant loss of one molecule of water to form decaturin E. Decaturin E is the substrate of the cytochrome P450 monooxygenase olcJ which hydroxylates it at the C-29 position to form decaturin F. The short-chain dehydrogenase/reductase olcF may catalyze the oxidation of decaturin F to generate the 29-hydroxyl-27-one intermediate, and subsequent hemiacetal formation probably leads to the formation of decaturin C. The dioxygenase olcK may be a peroxisomal enzyme that catalyzes the hydroxylation of decaturin C into decaturin A once decaturin C is shuttled into the peroxisome by the MFS transporter olcL. Finally the cytochrome P450 monooxygenase olcB catalyzes the oxidative rearrangement to yield 15-deoxyoxalicine B. In the absence of olcJ, decaturin E may be shunted to a pathway in which it is oxidized to a ketone, possibly by olcF, to form decaturin D, which undergoes further allylic oxidation to yield decaturin G. Moreover, in the absence of oclK or oclL, oclB can convert decaturin C into 15-deoxyoxalicine A. This Penicillium canescens protein is MFS-type transporter olcL.